Reading from the N-terminus, the 455-residue chain is Fumarate hydratase class II (455 aa).

Substrate-binding positions include 96-98, 122-125, 132-134, and T180; these read SGT, HPND, and SSN. H181 acts as the Proton donor/acceptor in catalysis. S311 is an active-site residue. Residues S312 and 317 to 319 contribute to the substrate site; that span reads KVN.

It belongs to the class-II fumarase/aspartase family. Fumarase subfamily. As to quaternary structure, homotetramer.

The protein localises to the cytoplasm. It catalyses the reaction (S)-malate = fumarate + H2O. It functions in the pathway carbohydrate metabolism; tricarboxylic acid cycle; (S)-malate from fumarate: step 1/1. In terms of biological role, involved in the TCA cycle. Catalyzes the stereospecific interconversion of fumarate to L-malate. The polypeptide is Fumarate hydratase class II (Listeria monocytogenes serotype 4b (strain F2365)).